The sequence spans 686 residues: Alpha-amylase 1 (686 aa).

The Nucleophile role is filled by Glu125. Asp216 serves as the catalytic Proton donor.

This sequence belongs to the glycosyl hydrolase 57 family.

Its subcellular location is the cytoplasm. It catalyses the reaction Endohydrolysis of (1-&gt;4)-alpha-D-glucosidic linkages in polysaccharides containing three or more (1-&gt;4)-alpha-linked D-glucose units.. Functionally, this amylase is a highly liquefying-type: oligomers appeared at the beginning of incubation, followed by a graded decrease in the amounts of maltotriose, maltose and glucose in prolonged incubation. The polypeptide is Alpha-amylase 1 (amyA) (Dictyoglomus thermophilum (strain ATCC 35947 / DSM 3960 / H-6-12)).